A 455-amino-acid chain; its full sequence is Bifunctional protein GlmU (455 aa).

Residues 1-228 are pyrophosphorylase; sequence MYKCALVLAA…YEETIGVNSR (228 aa). Residues 8–11, K22, Q73, and 78–79 each bind UDP-N-acetyl-alpha-D-glucosamine; these read LAAG and GT. Mg(2+) is bound at residue D103. UDP-N-acetyl-alpha-D-glucosamine contacts are provided by G140, E154, N169, and N226. Mg(2+) is bound at residue N226. The tract at residues 229-249 is linker; the sequence is VQLAEAEEILKNRINLMHMEN. The tract at residues 250 to 455 is N-acetyltransferase; the sequence is GVTLIDPRTT…GWVDKKGLKK (206 aa). Residues R331 and K349 each contribute to the UDP-N-acetyl-alpha-D-glucosamine site. The active-site Proton acceptor is H361. Residues Y364 and N375 each contribute to the UDP-N-acetyl-alpha-D-glucosamine site. Acetyl-CoA contacts are provided by residues 384–385, A421, and R438; that span reads NY.

In the N-terminal section; belongs to the N-acetylglucosamine-1-phosphate uridyltransferase family. This sequence in the C-terminal section; belongs to the transferase hexapeptide repeat family. In terms of assembly, homotrimer. It depends on Mg(2+) as a cofactor.

It localises to the cytoplasm. The catalysed reaction is alpha-D-glucosamine 1-phosphate + acetyl-CoA = N-acetyl-alpha-D-glucosamine 1-phosphate + CoA + H(+). It carries out the reaction N-acetyl-alpha-D-glucosamine 1-phosphate + UTP + H(+) = UDP-N-acetyl-alpha-D-glucosamine + diphosphate. Its pathway is nucleotide-sugar biosynthesis; UDP-N-acetyl-alpha-D-glucosamine biosynthesis; N-acetyl-alpha-D-glucosamine 1-phosphate from alpha-D-glucosamine 6-phosphate (route II): step 2/2. It participates in nucleotide-sugar biosynthesis; UDP-N-acetyl-alpha-D-glucosamine biosynthesis; UDP-N-acetyl-alpha-D-glucosamine from N-acetyl-alpha-D-glucosamine 1-phosphate: step 1/1. It functions in the pathway bacterial outer membrane biogenesis; LPS lipid A biosynthesis. Its function is as follows. Catalyzes the last two sequential reactions in the de novo biosynthetic pathway for UDP-N-acetylglucosamine (UDP-GlcNAc). The C-terminal domain catalyzes the transfer of acetyl group from acetyl coenzyme A to glucosamine-1-phosphate (GlcN-1-P) to produce N-acetylglucosamine-1-phosphate (GlcNAc-1-P), which is converted into UDP-GlcNAc by the transfer of uridine 5-monophosphate (from uridine 5-triphosphate), a reaction catalyzed by the N-terminal domain. The chain is Bifunctional protein GlmU from Clostridium beijerinckii (strain ATCC 51743 / NCIMB 8052) (Clostridium acetobutylicum).